A 456-amino-acid chain; its full sequence is Bifunctional protein GlmU (456 aa).

Residues M1–R229 form a pyrophosphorylase region. Residues L7–G10, K21, Q73, G78–T79, Y103–D105, G139, E154, N169, and N227 contribute to the UDP-N-acetyl-alpha-D-glucosamine site. Mg(2+) is bound at residue D105. Residue N227 participates in Mg(2+) binding. Residues V230 to A250 are linker. Positions G251–S456 are N-acetyltransferase. UDP-N-acetyl-alpha-D-glucosamine contacts are provided by R333 and K351. H363 (proton acceptor) is an active-site residue. Y366 and N377 together coordinate UDP-N-acetyl-alpha-D-glucosamine. Acetyl-CoA contacts are provided by residues A380, N386 to Y387, S405, A423, and R440.

It in the N-terminal section; belongs to the N-acetylglucosamine-1-phosphate uridyltransferase family. The protein in the C-terminal section; belongs to the transferase hexapeptide repeat family. In terms of assembly, homotrimer. Requires Mg(2+) as cofactor.

Its subcellular location is the cytoplasm. The catalysed reaction is alpha-D-glucosamine 1-phosphate + acetyl-CoA = N-acetyl-alpha-D-glucosamine 1-phosphate + CoA + H(+). It carries out the reaction N-acetyl-alpha-D-glucosamine 1-phosphate + UTP + H(+) = UDP-N-acetyl-alpha-D-glucosamine + diphosphate. Its pathway is nucleotide-sugar biosynthesis; UDP-N-acetyl-alpha-D-glucosamine biosynthesis; N-acetyl-alpha-D-glucosamine 1-phosphate from alpha-D-glucosamine 6-phosphate (route II): step 2/2. It functions in the pathway nucleotide-sugar biosynthesis; UDP-N-acetyl-alpha-D-glucosamine biosynthesis; UDP-N-acetyl-alpha-D-glucosamine from N-acetyl-alpha-D-glucosamine 1-phosphate: step 1/1. It participates in bacterial outer membrane biogenesis; LPS lipid A biosynthesis. Its function is as follows. Catalyzes the last two sequential reactions in the de novo biosynthetic pathway for UDP-N-acetylglucosamine (UDP-GlcNAc). The C-terminal domain catalyzes the transfer of acetyl group from acetyl coenzyme A to glucosamine-1-phosphate (GlcN-1-P) to produce N-acetylglucosamine-1-phosphate (GlcNAc-1-P), which is converted into UDP-GlcNAc by the transfer of uridine 5-monophosphate (from uridine 5-triphosphate), a reaction catalyzed by the N-terminal domain. In Bordetella petrii (strain ATCC BAA-461 / DSM 12804 / CCUG 43448), this protein is Bifunctional protein GlmU.